Reading from the N-terminus, the 513-residue chain is Sphingolipid C9-methyltransferase (513 aa).

Transmembrane regions (helical) follow at residues 52–72 (ILFS…GLGF) and 74–94 (TWVF…WSIM). S-adenosyl-L-methionine is bound by residues 222 to 223 (YT), 259 to 267 (VLDIGCGWG), 285 to 290 (TLGRNQ), and 315 to 316 (YR).

This sequence belongs to the CFA/CMAS family.

The protein resides in the membrane. The catalysed reaction is a (4E,8E)-4-sphinga-4,8-dienine ceramide + S-adenosyl-L-methionine = a 9-methyl-(4E,8E)-sphinga-4,8-dienine ceramide + S-adenosyl-L-homocysteine + H(+). It participates in lipid metabolism; sphingolipid metabolism. Functionally, catalyzes methylation of the sphingoid base component of glucosylceramides (GluCers) at the C9-position. Sphingolipid C9-methylation requires 4,8-desaturated ceramides as substrates. Glucosylceramides play important roles in growth, differentiation and pathogenicity. The methyl group at the C9-position distinguishes fungal glucosylceramides from those of plants and animals, and may thus play a role in host-pathogen interactions enabling the host to recognize the fungal attack and initiate specific defense responses. Not necessary for vegetative growth at low temperatures, but plays a role in hyphal formation on solid medium. The protein is Sphingolipid C9-methyltransferase of Candida albicans (strain SC5314 / ATCC MYA-2876) (Yeast).